The chain runs to 551 residues: MRPSSAAWICLLLRIANYTCYSYHVGRSDLYVGRAPRRMTKLSYENGKPHIDAGVVNYFKQIREEFPFFKRENCPAYFDSAATTQKPACVIGVSCPIAQLHRFVSPLCLTASPHRFASPLRLTASPHRFASPQKLTQFYSSENANVHRGIYKMSLDATRSYEQVRKTIKNFINCEREDEIIFTSGTTHGLNLICSMLMERVIKRRQDEIHLTYLEHHSNIVPWQEQVKRKKKGKIKYIPLKSTGYIHIKRLRKRINRNTKVVSISHVSNVLGNIQKLTAIIKAVKEKNKNAIVIVDAAQSFAHIRYDLRRMEANNCCPDVLIASGHKFCAPLGCGFMYLKNTLTCSYKFKPLLYGSNMITTVGKYESEFESPPQLFESGTQNIAGVISMGVAINFLERIDQRLLCRYEMFLYDMLVYHLGQHLQRGLVQLPGGVSESGGSSGGSGGSRPTDPCRLYIHNSRRGGGKKVPILPLWSDQFSSFDLVTFLDFKNVCIRSGHHCASLLLKEFLRIPDCARVSLFFYNTPEEVQFLAEQIASIARMLSGMNRGGVK.

Residues 1-22 (MRPSSAAWICLLLRIANYTCYS) form the signal peptide. The residue at position 327 (K327) is an N6-(pyridoxal phosphate)lysine. Residue C500 is the Cysteine persulfide intermediate of the active site.

The protein belongs to the class-V pyridoxal-phosphate-dependent aminotransferase family. Csd subfamily. In terms of assembly, monomer. Interacts with SufE; interaction enhances cysteine desulfurase activity of SufS. Requires pyridoxal 5'-phosphate as cofactor.

It localises to the plastid. The protein localises to the apicoplast. It catalyses the reaction (sulfur carrier)-H + L-cysteine = (sulfur carrier)-SH + L-alanine. Its pathway is cofactor biosynthesis; iron-sulfur cluster biosynthesis. In terms of biological role, catalyzes sulfur activation and mobilization in sulfur mobilization (SUF) pathway for iron-sulfur (Fe-S) cluster biogenesis. Active when in complex with a partner protein SufE. Required for apicoplast maintenance. Plays a role in the development of sporozoites in oocysts in mosquitoes. The polypeptide is Cysteine desulfurase SufS (Plasmodium vivax).